We begin with the raw amino-acid sequence, 255 residues long: Diphthine synthase (255 aa).

S-adenosyl-L-methionine contacts are provided by residues L9, D85, V88, 113–114 (SI), L164, A207, and H232.

It belongs to the diphthine synthase family. Homodimer.

The catalysed reaction is 2-[(3S)-amino-3-carboxypropyl]-L-histidyl-[translation elongation factor 2] + 3 S-adenosyl-L-methionine = diphthine-[translation elongation factor 2] + 3 S-adenosyl-L-homocysteine + 3 H(+). It functions in the pathway protein modification; peptidyl-diphthamide biosynthesis. S-adenosyl-L-methionine-dependent methyltransferase that catalyzes the trimethylation of the amino group of the modified target histidine residue in translation elongation factor 2 (EF-2), to form an intermediate called diphthine. The three successive methylation reactions represent the second step of diphthamide biosynthesis. The polypeptide is Diphthine synthase (Methanococcus maripaludis (strain C7 / ATCC BAA-1331)).